Consider the following 259-residue polypeptide: Type III pantothenate kinase (259 aa).

6–13 is a binding site for ATP; that stretch reads DCGNTNTV. Residue 107-110 participates in substrate binding; the sequence is GPDR. Asp-109 serves as the catalytic Proton acceptor. K(+) is bound at residue Asp-129. Residue Thr-132 participates in ATP binding. Position 184 (Thr-184) interacts with substrate.

This sequence belongs to the type III pantothenate kinase family. In terms of assembly, homodimer. It depends on NH4(+) as a cofactor. Requires K(+) as cofactor.

Its subcellular location is the cytoplasm. It catalyses the reaction (R)-pantothenate + ATP = (R)-4'-phosphopantothenate + ADP + H(+). It participates in cofactor biosynthesis; coenzyme A biosynthesis; CoA from (R)-pantothenate: step 1/5. Functionally, catalyzes the phosphorylation of pantothenate (Pan), the first step in CoA biosynthesis. This chain is Type III pantothenate kinase, found in Jannaschia sp. (strain CCS1).